The following is a 431-amino-acid chain: Adenylosuccinate synthetase (431 aa).

GTP contacts are provided by residues 15–21 (GDEGKGK) and 43–45 (GHT). The active-site Proton acceptor is the Asp16. Residues Asp16 and Gly43 each contribute to the Mg(2+) site. Residues 16–19 (DEGK), 41–44 (NAGH), Thr135, Arg149, Asn227, Thr242, and Arg306 each bind IMP. Residue His44 is the Proton donor of the active site. 302–308 (VTTGRKR) contributes to the substrate binding site. GTP is bound by residues Arg308, 334 to 336 (KLD), and 416 to 418 (GVG).

The protein belongs to the adenylosuccinate synthetase family. Homodimer. Mg(2+) serves as cofactor.

The protein localises to the cytoplasm. It catalyses the reaction IMP + L-aspartate + GTP = N(6)-(1,2-dicarboxyethyl)-AMP + GDP + phosphate + 2 H(+). It participates in purine metabolism; AMP biosynthesis via de novo pathway; AMP from IMP: step 1/2. Plays an important role in the de novo pathway and in the salvage pathway of purine nucleotide biosynthesis. Catalyzes the first committed step in the biosynthesis of AMP from IMP. The protein is Adenylosuccinate synthetase of Monosiga brevicollis (Choanoflagellate).